A 371-amino-acid polypeptide reads, in one-letter code: Phospho-N-acetylmuramoyl-pentapeptide-transferase (371 aa).

11 helical membrane passes run 21 to 41 (NHIL…DFYY), 46 to 66 (LTIP…IGIP), 92 to 112 (PTMG…ILYF), 119 to 139 (IILT…IDDF), 156 to 176 (ILLQ…NNLI), 182 to 202 (IANK…FVLL), 216 to 236 (GLLS…ILIE), 241 to 261 (NSTL…FLFL), 268 to 288 (LFMG…IALI), 296 to 316 (LIMG…VSIF), and 349 to 369 (IVSS…IFLI).

The protein belongs to the glycosyltransferase 4 family. MraY subfamily. The cofactor is Mg(2+).

Its subcellular location is the cell inner membrane. It carries out the reaction UDP-N-acetyl-alpha-D-muramoyl-L-alanyl-gamma-D-glutamyl-meso-2,6-diaminopimeloyl-D-alanyl-D-alanine + di-trans,octa-cis-undecaprenyl phosphate = di-trans,octa-cis-undecaprenyl diphospho-N-acetyl-alpha-D-muramoyl-L-alanyl-D-glutamyl-meso-2,6-diaminopimeloyl-D-alanyl-D-alanine + UMP. The protein operates within cell wall biogenesis; peptidoglycan biosynthesis. Its function is as follows. Catalyzes the initial step of the lipid cycle reactions in the biosynthesis of the cell wall peptidoglycan: transfers peptidoglycan precursor phospho-MurNAc-pentapeptide from UDP-MurNAc-pentapeptide onto the lipid carrier undecaprenyl phosphate, yielding undecaprenyl-pyrophosphoryl-MurNAc-pentapeptide, known as lipid I. This chain is Phospho-N-acetylmuramoyl-pentapeptide-transferase, found in Prochlorococcus marinus (strain NATL2A).